Consider the following 260-residue polypeptide: 3-methyl-2-oxobutanoate hydroxymethyltransferase (260 aa).

Asp-44 and Asp-83 together coordinate Mg(2+). Residues 44 to 45 (DS), Asp-83, and Lys-113 contribute to the 3-methyl-2-oxobutanoate site. Mg(2+) is bound at residue Glu-115. The Proton acceptor role is filled by Glu-182.

The protein belongs to the PanB family. As to quaternary structure, homodecamer; pentamer of dimers. Mg(2+) is required as a cofactor.

It localises to the cytoplasm. It catalyses the reaction 3-methyl-2-oxobutanoate + (6R)-5,10-methylene-5,6,7,8-tetrahydrofolate + H2O = 2-dehydropantoate + (6S)-5,6,7,8-tetrahydrofolate. It functions in the pathway cofactor biosynthesis; (R)-pantothenate biosynthesis; (R)-pantoate from 3-methyl-2-oxobutanoate: step 1/2. Catalyzes the reversible reaction in which hydroxymethyl group from 5,10-methylenetetrahydrofolate is transferred onto alpha-ketoisovalerate to form ketopantoate. In Synechocystis sp. (strain ATCC 27184 / PCC 6803 / Kazusa), this protein is 3-methyl-2-oxobutanoate hydroxymethyltransferase.